Consider the following 450-residue polypeptide: Glucose-6-phosphate isomerase (450 aa).

The active-site Proton donor is glutamate 289. Residues histidine 310 and lysine 424 contribute to the active site.

Belongs to the GPI family.

The protein resides in the cytoplasm. It catalyses the reaction alpha-D-glucose 6-phosphate = beta-D-fructose 6-phosphate. The protein operates within carbohydrate biosynthesis; gluconeogenesis. It participates in carbohydrate degradation; glycolysis; D-glyceraldehyde 3-phosphate and glycerone phosphate from D-glucose: step 2/4. Its function is as follows. Catalyzes the reversible isomerization of glucose-6-phosphate to fructose-6-phosphate. The chain is Glucose-6-phosphate isomerase from Leptospira biflexa serovar Patoc (strain Patoc 1 / Ames).